The primary structure comprises 170 residues: TFIIB-type zinc finger protein (170 aa).

The segment at 1 to 30 (MECPVCGSNEIVWDNKNGEVVCSNCGIIID) adopts a TFIIB-type zinc-finger fold. Zn(2+)-binding residues include cysteine 3, cysteine 6, cysteine 22, and cysteine 25.

This sequence belongs to the TFIIB family. Requires Zn(2+) as cofactor.

The chain is TFIIB-type zinc finger protein from Saccharolobus shibatae (strain ATCC 51178 / DSM 5389 / JCM 8931 / NBRC 15437 / B12) (Sulfolobus shibatae).